The sequence spans 481 residues: Abietadienol/abietadienal oxidase (481 aa).

Residues 2–22 (ADQISLLLVVFTAAVALLHLI) traverse the membrane as a helical segment. Cys430 contacts heme.

Belongs to the cytochrome P450 family. Heme is required as a cofactor. Expressed in young tissues such as flushing buds and green bark tissues. Lower levels in mature needles and bark.

The protein resides in the membrane. The catalysed reaction is abieta-7,13-dien-18-ol + 2 reduced [NADPH--hemoprotein reductase] + 2 O2 = abieta-7,13-dien-18-oate + 2 oxidized [NADPH--hemoprotein reductase] + 3 H2O + 3 H(+). Functionally, multifunctional and multisubstrate cytochrome P450 that oxidizes the respective carbon 18 of abietadienol, abietadienal, levopimaradienol, isopimara-7,15-dienol, isopimara-7,15-dienal, dehydroabietadienol, and dehydroabietadienal. In Pinus taeda (Loblolly pine), this protein is Abietadienol/abietadienal oxidase (CYP720B1).